Here is a 495-residue protein sequence, read N- to C-terminus: uncharacterized protein (495 aa).

Positions 16-74 (SSKRGDLIELAVTALDEDGNGIGTHDGTNVHVIGALPDERVRARLTHVGKRHLHAEAVE) constitute a TRAM domain. [4Fe-4S] cluster is bound by residues Cys88, Cys94, Cys97, and Cys175. Gln299, Tyr328, Glu349, and Asn397 together coordinate S-adenosyl-L-methionine. Residue Cys424 is the Nucleophile of the active site. Basic and acidic residues predominate over residues 472–483 (DRLESPAKERSR). Residues 472–495 (DRLESPAKERSRPRASHKAKGGAV) form a disordered region. The segment covering 484-495 (PRASHKAKGGAV) has biased composition (basic residues).

The protein belongs to the class I-like SAM-binding methyltransferase superfamily. RNA M5U methyltransferase family.

This is an uncharacterized protein from Geobacter sulfurreducens (strain ATCC 51573 / DSM 12127 / PCA).